Reading from the N-terminus, the 638-residue chain is Autolysin (638 aa).

The first 28 residues, 1-28 (MSLATRRFGAAAALLVAACVLCTAPAWA), serve as a signal peptide directing secretion. The propeptide at 29–183 (QNETTGTGMV…LKSILKGSQK (155 aa)) is activation peptide. The N-linked (GlcNAc...) asparagine glycan is linked to asparagine 30. The Cysteine switch signature appears at 95 to 102 (PRCNVPRA). Zn(2+) is bound at residue cysteine 97. Asparagine 126 is a glycosylation site (N-linked (GlcNAc...) asparagine). The disordered stretch occupies residues 269–292 (VTPPPRPPRPPRPPPRAGSTISSL). A compositionally biased stretch (pro residues) spans 270–284 (TPPPRPPRPPRPPPR). Residue asparagine 296 is glycosylated (N-linked (GlcNAc...) asparagine). Histidine 396 provides a ligand contact to Zn(2+). The active site involves glutamate 397. Residues histidine 400 and histidine 406 each contribute to the Zn(2+) site. 4 N-linked (GlcNAc...) asparagine glycosylation sites follow: asparagine 458, asparagine 465, asparagine 470, and asparagine 523.

Belongs to the peptidase M11 family. It depends on Zn(2+) as a cofactor. In terms of processing, present in 2 forms: an inactive V-form in vegetative cells and an active and soluble G-form. The V-form enzyme may be converted to the G-form enzyme during gametic differentiation under nitrogen-starved conditions.

The protein resides in the periplasm. It localises to the secreted. The protein localises to the cell wall. It carries out the reaction Cleavage of the proline- and hydroxyproline-rich proteins of the Chlamydomonas cell wall. Also cleaves azocasein, gelatin and Leu-Trp-Met-|-Arg-Phe-Ala.. In terms of biological role, mediates digestion of the cell walls of the 2 mating type gametes during mating as a necessary prelude to cell fusion. This enzyme acts specifically on the framework proteins (inner wall) of the cell wall, cleaving several model peptides at specific sites. This is Autolysin from Chlamydomonas reinhardtii (Chlamydomonas smithii).